The sequence spans 106 residues: UPF0060 membrane protein R01043 (106 aa).

Transmembrane regions (helical) follow at residues 5 to 25 (AIYF…WSWL), 31 to 51 (ALWL…LTMV), 61 to 81 (AAYG…AEGV), and 85 to 105 (HWDM…LAGP).

Belongs to the UPF0060 family.

The protein localises to the cell inner membrane. This is UPF0060 membrane protein R01043 from Rhizobium meliloti (strain 1021) (Ensifer meliloti).